A 189-amino-acid polypeptide reads, in one-letter code: MKNFIKSFRLTLVFCVFFSVCYILVLWIFAQFAGPNSGNAEVVELNGKVVGAANVGQSFTEDIYFWGRPSCAGDGYDATSSAGSNKGPTNAEYLAEVEARIDTFLKHHPYLSRKEVPAEMVTASGSGLDPDITPDCAYVQVQRVAKARGMSEETVKAIVDKAVEKPFMGIFGTEKVNVLKLNAALEKAK.

Residues 10 to 30 (LTLVFCVFFSVCYILVLWIFA) form a helical membrane-spanning segment.

Belongs to the KdpC family. The system is composed of three essential subunits: KdpA, KdpB and KdpC.

The protein localises to the cell inner membrane. In terms of biological role, part of the high-affinity ATP-driven potassium transport (or Kdp) system, which catalyzes the hydrolysis of ATP coupled with the electrogenic transport of potassium into the cytoplasm. This subunit acts as a catalytic chaperone that increases the ATP-binding affinity of the ATP-hydrolyzing subunit KdpB by the formation of a transient KdpB/KdpC/ATP ternary complex. This Phocaeicola vulgatus (strain ATCC 8482 / DSM 1447 / JCM 5826 / CCUG 4940 / NBRC 14291 / NCTC 11154) (Bacteroides vulgatus) protein is Potassium-transporting ATPase KdpC subunit.